We begin with the raw amino-acid sequence, 69 residues long: uncharacterized protein (69 aa).

The first 21 residues, 1–21 (MELLIPLSLLGLYLFSGTRDS), serve as a signal peptide directing secretion. Asn-41 carries an N-linked (GlcNAc...) asparagine glycan.

The protein localises to the secreted. This is an uncharacterized protein from Dictyostelium discoideum (Social amoeba).